The chain runs to 153 residues: Endoribonuclease YbeY (153 aa).

Residues histidine 116, histidine 120, and histidine 126 each coordinate Zn(2+).

The protein belongs to the endoribonuclease YbeY family. The cofactor is Zn(2+).

It is found in the cytoplasm. Its function is as follows. Single strand-specific metallo-endoribonuclease involved in late-stage 70S ribosome quality control and in maturation of the 3' terminus of the 16S rRNA. In Leifsonia xyli subsp. xyli (strain CTCB07), this protein is Endoribonuclease YbeY.